Reading from the N-terminus, the 100-residue chain is Integration host factor subunit alpha (100 aa).

It belongs to the bacterial histone-like protein family. As to quaternary structure, heterodimer of an alpha and a beta chain.

Its function is as follows. This protein is one of the two subunits of integration host factor, a specific DNA-binding protein that functions in genetic recombination as well as in transcriptional and translational control. The sequence is that of Integration host factor subunit alpha from Caulobacter vibrioides (strain ATCC 19089 / CIP 103742 / CB 15) (Caulobacter crescentus).